We begin with the raw amino-acid sequence, 558 residues long: Ceramide kinase-like protein (558 aa).

Positions 1–36 (MPWRRRRNRVSALEGGREEEAPPEAAAVPPALLTSP) are disordered. 2 consecutive short sequence motifs (nuclear localization signal) follow at residues 2–9 (PWRRRRNR) and 102–106 (KLKRR). The DAGKc domain occupies 164–339 (NRPKSLKILL…VDVCTFSTAG (176 aa)).

In terms of processing, phosphorylated on serine residues. As to expression, isoform 1 and isoform 2 are expressed in adult retina, liver and pancreas as well as in fetal brain, lung and kidney. Isoform 3 is expressed in adult retina as well as in fetal lung and liver. Isoform 4 is expressed in adult retina, lung and kidney as well as in fetal lung and liver. Moderately expressed in retina, kidney, lung, testis, trachea, and pancreas. Weakly expressed in brain, placenta and liver.

Its subcellular location is the cytoplasm. The protein localises to the nucleus. The protein resides in the nucleolus. It is found in the golgi apparatus. It localises to the trans-Golgi network. Its subcellular location is the endoplasmic reticulum. Has no detectable ceramide-kinase activity. Overexpression of CERKL protects cells from apoptosis in oxidative stress conditions. In Homo sapiens (Human), this protein is Ceramide kinase-like protein (CERKL).